The primary structure comprises 148 residues: Snaclec alboaggregin-D subunit beta (148 aa).

The signal sequence occupies residues 1–23 (MGRFISVSFGLLVVFLSLSGAGA). A disulfide bridge links Cys-27 with Cys-38. Residues 34 to 145 (YDLYCYKVFK…CNSTYSFVCK (112 aa)) form the C-type lectin domain. The N-linked (GlcNAc...) asparagine glycan is linked to Asn-47. Cystine bridges form between Cys-55-Cys-144 and Cys-121-Cys-136. Asn-137 is a glycosylation site (N-linked (GlcNAc...) asparagine).

Tetramer of heterodimers of alpha and beta subunits (alphabeta)(4); disulfide-linked. As to expression, expressed by the venom gland.

The protein localises to the secreted. In terms of biological role, snaclec that induces human platelet aggregation in the absence of any cofactor with the EC(50) of 0.25 nM and causes tyrosine phosphorylation in human platelets. Antibodies against either platelet GPIbalpha (GP1BA) or GPVI (GP6) inhibit alboaggregin D-induced platelet aggregation. Only the combination of these two antibodies completely inhibit aggregation, suggesting that it acts through both GPIbalpha (GP1BA) and GPVI (GP6). The polypeptide is Snaclec alboaggregin-D subunit beta (Trimeresurus albolabris (White-lipped pit viper)).